We begin with the raw amino-acid sequence, 483 residues long: Cysteine--tRNA ligase (483 aa).

Zn(2+) is bound at residue C28. The short motif at 30 to 40 is the 'HIGH' region element; sequence MTVYDYCHLGH. Zn(2+)-binding residues include C212, H237, and E241. Residues 269 to 273 carry the 'KMSKS' region motif; that stretch reads KMSKS. K272 contributes to the ATP binding site.

The protein belongs to the class-I aminoacyl-tRNA synthetase family. In terms of assembly, monomer. Zn(2+) serves as cofactor.

The protein resides in the cytoplasm. The enzyme catalyses tRNA(Cys) + L-cysteine + ATP = L-cysteinyl-tRNA(Cys) + AMP + diphosphate. In Bordetella avium (strain 197N), this protein is Cysteine--tRNA ligase.